Here is a 977-residue protein sequence, read N- to C-terminus: Vacuolar protein sorting-associated protein 54 (977 aa).

Ser8 carries the phosphoserine modification. 2 coiled-coil regions span residues 240–260 (ELQDYLRKTSQAVKMLRDKIA) and 480–507 (LDKNQRTRELEEISQQKNAAKDNSLDTE). A compositionally biased stretch (polar residues) spans 535 to 552 (TSQRNASPNSEPCSSDSV). Residues 535 to 575 (TSQRNASPNSEPCSSDSVSEPECTTDSSSSKEHTSSSAIPG) form a disordered region. Positions 582-603 (SEDMKLTDSELGKLANNIQELL) form a coiled coil.

This sequence belongs to the VPS54 family. Component of the Golgi-associated retrograde protein (GARP) complex, also called VFT (VPS fifty-three) complex, composed of VPS51, VPS52, VPS53 and VPS54. EIPR1 interacts with GARP complex and mediates its recruitment to the trans-Golgi network. Interacts with VPS51 in an EIPR1-independent manner.

The protein resides in the golgi apparatus. It is found in the trans-Golgi network. The protein localises to the membrane. Acts as a component of the GARP complex that is involved in retrograde transport from early and late endosomes to the trans-Golgi network (TGN). The GARP complex is required for the maintenance of the cycling of mannose 6-phosphate receptors between the TGN and endosomes, this cycling is necessary for proper lysosomal sorting of acid hydrolases such as CTSD. Within the GARP complex, required to tether the complex to the TGN. Not involved in endocytic recycling. The chain is Vacuolar protein sorting-associated protein 54 (VPS54) from Homo sapiens (Human).